We begin with the raw amino-acid sequence, 277 residues long: Digeranylgeranylglyceryl phosphate synthase (277 aa).

8 helical membrane-spanning segments follow: residues 16–36 (LLAG…LPEL), 40–60 (ILVF…NDYF), 83–105 (AALW…INIW), 107–124 (FLLA…AWKL), 146–166 (GAIA…AFLV), 202–222 (VGAL…KAGI), 224–244 (LGYL…FLIL), and 256–276 (QILL…ASLV).

Belongs to the UbiA prenyltransferase family. DGGGP synthase subfamily. Mg(2+) serves as cofactor.

The protein resides in the cell membrane. The catalysed reaction is sn-3-O-(geranylgeranyl)glycerol 1-phosphate + (2E,6E,10E)-geranylgeranyl diphosphate = 2,3-bis-O-(geranylgeranyl)-sn-glycerol 1-phosphate + diphosphate. Its pathway is membrane lipid metabolism; glycerophospholipid metabolism. Prenyltransferase that catalyzes the transfer of the geranylgeranyl moiety of geranylgeranyl diphosphate (GGPP) to the C2 hydroxyl of (S)-3-O-geranylgeranylglyceryl phosphate (GGGP). This reaction is the second ether-bond-formation step in the biosynthesis of archaeal membrane lipids. This is Digeranylgeranylglyceryl phosphate synthase from Thermococcus kodakarensis (strain ATCC BAA-918 / JCM 12380 / KOD1) (Pyrococcus kodakaraensis (strain KOD1)).